Reading from the N-terminus, the 376-residue chain is Erythronate-4-phosphate dehydrogenase (376 aa).

Substrate-binding residues include serine 45 and threonine 67. Aspartate 147 serves as a coordination point for NAD(+). Residue arginine 209 is part of the active site. An NAD(+)-binding site is contributed by aspartate 233. Glutamate 238 is a catalytic residue. Histidine 255 functions as the Proton donor in the catalytic mechanism. NAD(+) is bound at residue glycine 258. Tyrosine 259 is a substrate binding site.

The protein belongs to the D-isomer specific 2-hydroxyacid dehydrogenase family. PdxB subfamily. As to quaternary structure, homodimer.

Its subcellular location is the cytoplasm. It catalyses the reaction 4-phospho-D-erythronate + NAD(+) = (R)-3-hydroxy-2-oxo-4-phosphooxybutanoate + NADH + H(+). It functions in the pathway cofactor biosynthesis; pyridoxine 5'-phosphate biosynthesis; pyridoxine 5'-phosphate from D-erythrose 4-phosphate: step 2/5. Its function is as follows. Catalyzes the oxidation of erythronate-4-phosphate to 3-hydroxy-2-oxo-4-phosphonooxybutanoate. In Shewanella sp. (strain MR-7), this protein is Erythronate-4-phosphate dehydrogenase.